The primary structure comprises 2312 residues: Protein Ycf2 (2312 aa).

3 disordered regions span residues Ser-170–Asp-191, Thr-223–Asn-253, and Lys-942–Glu-1009. Residues Lys-232 to Arg-242 are compositionally biased toward low complexity. Basic and acidic residues-rich tracts occupy residues Leu-243–Asn-252 and Lys-950–Arg-1007. Gly-1439 to Ser-1446 serves as a coordination point for ATP. Disordered regions lie at residues Tyr-1513–Gly-1532, Leu-1857–Pro-1983, and Pro-2050–Ser-2166. Residues Thr-1863–Glu-1963 show a composition bias toward acidic residues. Positions Gly-1964–Arg-1976 are enriched in basic and acidic residues. Composition is skewed to acidic residues over residues Pro-2050–Glu-2067 and Gly-2074–Ser-2149.

This sequence belongs to the Ycf2 family.

It localises to the plastid. The protein resides in the chloroplast stroma. Its function is as follows. Probable ATPase of unknown function. Its presence in a non-photosynthetic plant (Epifagus virginiana) and experiments in tobacco indicate that it has an essential function which is probably not related to photosynthesis. The protein is Protein Ycf2 of Oenothera parviflora (Small-flowered evening primrose).